Here is a 286-residue protein sequence, read N- to C-terminus: tRNA (guanine-N(7)-)-methyltransferase (286 aa).

S-adenosyl-L-methionine contacts are provided by residues G91, 114–115 (EI), 158–159 (NS), and L178. D181 is an active-site residue. S-adenosyl-L-methionine is bound at residue 256-258 (TEE).

Belongs to the class I-like SAM-binding methyltransferase superfamily. TrmB family. In terms of assembly, forms a complex with TRM82.

The protein resides in the nucleus. The enzyme catalyses guanosine(46) in tRNA + S-adenosyl-L-methionine = N(7)-methylguanosine(46) in tRNA + S-adenosyl-L-homocysteine. Its pathway is tRNA modification; N(7)-methylguanine-tRNA biosynthesis. In terms of biological role, catalyzes the formation of N(7)-methylguanine at position 46 (m7G46) in tRNA. This chain is tRNA (guanine-N(7)-)-methyltransferase, found in Cryptococcus neoformans var. neoformans serotype D (strain B-3501A) (Filobasidiella neoformans).